The sequence spans 324 residues: MAFAKISQVAHYVPEQVVTNHDLAQIMDTNDEWISSRTGIRQRHISRTESTSDLATEVAKKLMAKAGITGKELDFIILATITPDSMMPSTAARVQANIGANKAFAFDLTAACSGFVFALSTAEKFIASGRFQKGLVIGSETLSKAVDWSDRSTAVLFGDGAGGVLLEASEQEHFLAESLNSDGSRSECLTYGHSGLHSPFSDQESADSFLKMDGRTVFDFAIRDVAKSIKQTIDESPIEVTDLDYLLLHQANDRILDKMARKIGVDRAKLPANMMEYGNTSAASIPILLSECVEQGLIPLDGSQTVLLSGFGGGLTWGTLILTI.

Residues Cys-112 and His-249 contribute to the active site. An ACP-binding region spans residues 250–254; sequence QANDR. Residue Asn-279 is part of the active site.

It belongs to the thiolase-like superfamily. FabH family. As to quaternary structure, homodimer.

Its subcellular location is the cytoplasm. The catalysed reaction is malonyl-[ACP] + acetyl-CoA + H(+) = 3-oxobutanoyl-[ACP] + CO2 + CoA. It functions in the pathway lipid metabolism; fatty acid biosynthesis. Its function is as follows. Catalyzes the condensation reaction of fatty acid synthesis by the addition to an acyl acceptor of two carbons from malonyl-ACP. Catalyzes the first condensation reaction which initiates fatty acid synthesis and may therefore play a role in governing the total rate of fatty acid production. Possesses both acetoacetyl-ACP synthase and acetyl transacylase activities. Its substrate specificity determines the biosynthesis of branched-chain and/or straight-chain of fatty acids. This chain is Beta-ketoacyl-[acyl-carrier-protein] synthase III, found in Streptococcus pneumoniae serotype 19F (strain G54).